A 465-amino-acid polypeptide reads, in one-letter code: tRNA (guanine(37)-N(1))-methyltransferase (465 aa).

The N-terminal 20 residues, 1–20 (MDKNSQLRDMNLFRAPAARA), are a transit peptide targeting the mitochondrion. Residues His238 and 304–305 (DG) contribute to the S-adenosyl-L-methionine site. The disordered stretch occupies residues 326 to 345 (AVIKPPRPPRKSAAPPPEPV). Asn359 provides a ligand contact to S-adenosyl-L-methionine.

The protein belongs to the class I-like SAM-binding methyltransferase superfamily. TRM5/TYW2 family. As to quaternary structure, monomer.

The protein resides in the mitochondrion matrix. Its subcellular location is the nucleus. The protein localises to the cytoplasm. It catalyses the reaction guanosine(37) in tRNA + S-adenosyl-L-methionine = N(1)-methylguanosine(37) in tRNA + S-adenosyl-L-homocysteine + H(+). Functionally, specifically methylates the N1 position of guanosine-37 in various cytoplasmic and mitochondrial tRNAs. Methylation is not dependent on the nature of the nucleoside 5' of the target nucleoside. This is the first step in the biosynthesis of wybutosine (yW), a modified base adjacent to the anticodon of tRNAs and required for accurate decoding. The polypeptide is tRNA (guanine(37)-N(1))-methyltransferase (Fusarium vanettenii (strain ATCC MYA-4622 / CBS 123669 / FGSC 9596 / NRRL 45880 / 77-13-4) (Fusarium solani subsp. pisi)).